The primary structure comprises 399 residues: Elongation factor Tu (399 aa).

Positions 10–209 (KPHVNIGTIG…EVDAYIPTPE (200 aa)) constitute a tr-type G domain. Residues 19 to 26 (GHVDHGKT) form a G1 region. Position 19–26 (19–26 (GHVDHGKT)) interacts with GTP. T26 provides a ligand contact to Mg(2+). The tract at residues 60-64 (GITIA) is G2. The G3 stretch occupies residues 81–84 (DCPG). GTP is bound by residues 81-85 (DCPGH) and 136-139 (NKQD). The G4 stretch occupies residues 136-139 (NKQD). A G5 region spans residues 174–176 (SAL).

Belongs to the TRAFAC class translation factor GTPase superfamily. Classic translation factor GTPase family. EF-Tu/EF-1A subfamily. In terms of assembly, monomer.

Its subcellular location is the cytoplasm. It carries out the reaction GTP + H2O = GDP + phosphate + H(+). GTP hydrolase that promotes the GTP-dependent binding of aminoacyl-tRNA to the A-site of ribosomes during protein biosynthesis. This chain is Elongation factor Tu, found in Helicobacter pylori (strain G27).